The primary structure comprises 580 residues: Arginine--tRNA ligase (580 aa).

The 'HIGH' region motif lies at 131–141 (ANPTGPLHVGH).

The protein belongs to the class-I aminoacyl-tRNA synthetase family. Monomer.

The protein resides in the cytoplasm. It catalyses the reaction tRNA(Arg) + L-arginine + ATP = L-arginyl-tRNA(Arg) + AMP + diphosphate. In Roseobacter denitrificans (strain ATCC 33942 / OCh 114) (Erythrobacter sp. (strain OCh 114)), this protein is Arginine--tRNA ligase.